Consider the following 273-residue polypeptide: MTLQDQIIKELGVKPVINPSQEIRRSVEFLKDYLLKHSFLKTYVLGISGGQDSTLAGRLAQLAVEELRADTGENYQFIAIRLPYGIQADEEDAQKALDFIKPDIALTINIKEAVDGQVRALNAAGVEITDFNKGNIKARQRMISQYAVAGQYAGAVIGTDHAAENITGFFTKFGDGGADLLPLFRLNKSQGKQLLAELGADKALYEKIPTADLEENKPGIADEIALGVTYQEIDAYLEGKVVSDKSRGIIENWWYKGQHKRHLPITIFDDFWK.

46–53 (GISGGQDS) provides a ligand contact to ATP. Mg(2+) is bound at residue Asp-52. Position 139 (Arg-139) interacts with deamido-NAD(+). Thr-159 contributes to the ATP binding site. Glu-164 contacts Mg(2+). 2 residues coordinate deamido-NAD(+): Lys-172 and Asp-179. ATP is bound by residues Lys-188 and Thr-210. 259–260 (HK) is a binding site for deamido-NAD(+).

It belongs to the NAD synthetase family. Homodimer.

It carries out the reaction deamido-NAD(+) + NH4(+) + ATP = AMP + diphosphate + NAD(+) + H(+). It participates in cofactor biosynthesis; NAD(+) biosynthesis; NAD(+) from deamido-NAD(+) (ammonia route): step 1/1. In terms of biological role, catalyzes the ATP-dependent amidation of deamido-NAD to form NAD. Uses ammonia as a nitrogen source. This chain is NH(3)-dependent NAD(+) synthetase, found in Streptococcus agalactiae serotype Ia (strain ATCC 27591 / A909 / CDC SS700).